The sequence spans 70 residues: Conotoxin Lt11.6 (70 aa).

An N-terminal signal peptide occupies residues 1–26; it reads MMFRLTSVGSFLLVIVFLNLVVLTNA. Intrachain disulfides connect cysteine 27–cysteine 41, cysteine 34–cysteine 46, cysteine 40–cysteine 50, and cysteine 45–cysteine 54. A propeptide spanning residues 58–70 is cleaved from the precursor; it reads AQRQKLLRSFGQR.

It belongs to the conotoxin I2 superfamily. In terms of tissue distribution, expressed by the venom duct.

The protein localises to the secreted. The chain is Conotoxin Lt11.6 from Conus litteratus (Lettered cone).